Reading from the N-terminus, the 414-residue chain is UDP-N-acetylmuramoylalanine--D-glutamate ligase (414 aa).

104 to 110 contacts ATP; it reads GSNGKST.

It belongs to the MurCDEF family.

The protein resides in the cytoplasm. The catalysed reaction is UDP-N-acetyl-alpha-D-muramoyl-L-alanine + D-glutamate + ATP = UDP-N-acetyl-alpha-D-muramoyl-L-alanyl-D-glutamate + ADP + phosphate + H(+). The protein operates within cell wall biogenesis; peptidoglycan biosynthesis. Cell wall formation. Catalyzes the addition of glutamate to the nucleotide precursor UDP-N-acetylmuramoyl-L-alanine (UMA). This chain is UDP-N-acetylmuramoylalanine--D-glutamate ligase, found in Francisella philomiragia subsp. philomiragia (strain ATCC 25017 / CCUG 19701 / FSC 153 / O#319-036).